A 75-amino-acid polypeptide reads, in one-letter code: Small capsomere-interacting protein (75 aa).

Belongs to the herpesviridae small capsomere-interacting protein family. In terms of assembly, interacts with the major capsid protein/MCP.

The protein localises to the virion. The protein resides in the host nucleus. Participates in the assembly of the infectious particles by decorating the outer surface of the capsid shell and thus forming a layer between the capsid and the tegument. Complexes composed of the major capsid protein and small capsomere-interacting protein/SCP assemble together in the host cytoplasm and are translocated to the nucleus, where they accumulate and participate in capsid assembly. The chain is Small capsomere-interacting protein from Homo sapiens (Human).